The primary structure comprises 67 residues: ATP synthase F(0) complex subunit 8 (67 aa).

The helical transmembrane segment at 8–24 (TWFINIVSMILTLFIVF) threads the bilayer. The residue at position 54 (Lys-54) is an N6-acetyllysine; alternate. Lys-54 carries the N6-succinyllysine; alternate modification. Lys-57 carries the N6-acetyllysine modification.

This sequence belongs to the ATPase protein 8 family. As to quaternary structure, component of the ATP synthase complex composed at least of ATP5F1A/subunit alpha, ATP5F1B/subunit beta, ATP5MC1/subunit c (homooctomer), MT-ATP6/subunit a, MT-ATP8/subunit 8, ATP5ME/subunit e, ATP5MF/subunit f, ATP5MG/subunit g, ATP5MK/subunit k, ATP5MJ/subunit j, ATP5F1C/subunit gamma, ATP5F1D/subunit delta, ATP5F1E/subunit epsilon, ATP5PF/subunit F6, ATP5PB/subunit b, ATP5PD/subunit d, ATP5PO/subunit OSCP. ATP synthase complex consists of a soluble F(1) head domain (subunits alpha(3) and beta(3)) - the catalytic core - and a membrane F(0) domain - the membrane proton channel (subunits c, a, 8, e, f, g, k and j). These two domains are linked by a central stalk (subunits gamma, delta, and epsilon) rotating inside the F1 region and a stationary peripheral stalk (subunits F6, b, d, and OSCP). Interacts with PRICKLE3.

The protein localises to the mitochondrion membrane. Functionally, subunit 8, of the mitochondrial membrane ATP synthase complex (F(1)F(0) ATP synthase or Complex V) that produces ATP from ADP in the presence of a proton gradient across the membrane which is generated by electron transport complexes of the respiratory chain. ATP synthase complex consist of a soluble F(1) head domain - the catalytic core - and a membrane F(1) domain - the membrane proton channel. These two domains are linked by a central stalk rotating inside the F(1) region and a stationary peripheral stalk. During catalysis, ATP synthesis in the catalytic domain of F(1) is coupled via a rotary mechanism of the central stalk subunits to proton translocation. In vivo, can only synthesize ATP although its ATP hydrolase activity can be activated artificially in vitro. Part of the complex F(0) domain. In Equus caballus (Horse), this protein is ATP synthase F(0) complex subunit 8.